Consider the following 336-residue polypeptide: Glutamyl endopeptidase (336 aa).

An N-terminal signal peptide occupies residues 1–29; the sequence is MKGKFLKVSSLFVATLTTATLVSSPAANA. The propeptide occupies 30-68; the sequence is LSSKAMDNHPQQTQSSKQQTPKIQKGGNLKPLEQREHAN. Positions 34 to 61 are disordered; the sequence is AMDNHPQQTQSSKQQTPKIQKGGNLKPL. Residues 39 to 51 are compositionally biased toward low complexity; it reads PQQTQSSKQQTPK. Residues His119, Asp161, and Ser237 each act as charge relay system in the active site. Residues 283-336 form a disordered region; sequence FANDDQPNNPDNPDNPNNPDNPNNPDEPNNPDNPNNPDNPDNGDNNNSDNPDAA. The segment covering 286-336 has biased composition (low complexity); sequence DDQPNNPDNPDNPNNPDNPNNPDEPNNPDNPNNPDNPDNGDNNNSDNPDAA. A run of 11 repeats spans residues 289-291, 292-294, 295-297, 298-300, 301-303, 304-306, 310-312, 313-315, 316-318, 319-321, and 322-324. Positions 289–324 are 11 X 3 AA repeats of P-[DN]-N; it reads PNNPDNPDNPNNPDNPNNPDEPNNPDNPNNPDNPDN.

This sequence belongs to the peptidase S1B family. Post-translationally, proteolytically cleaved by aureolysin (aur). This cleavage leads to the activation of SspA.

It is found in the secreted. It carries out the reaction Preferential cleavage: Glu-|-Xaa, Asp-|-Xaa.. Preferentially cleaves peptide bonds on the carboxyl-terminal side of aspartate and glutamate. Along with other extracellular proteases it is involved in colonization and infection of human tissues. Required for proteolytic maturation of thiol protease SspB and inactivation of SspC, an inhibitor of SspB. It is the most important protease for degradation of fibronectin-binding protein (FnBP) and surface protein A, which are involved in adherence to host cells. May also protect bacteria against host defense mechanism by cleaving the immunoglobulin classes IgG, IgA and IgM. May be involved in the stability of secreted lipases. The sequence is that of Glutamyl endopeptidase (sspA) from Staphylococcus aureus (strain NCTC 8325 / PS 47).